Consider the following 89-residue polypeptide: Small ribosomal subunit protein uS19 (89 aa).

It belongs to the universal ribosomal protein uS19 family.

In terms of biological role, protein S19 forms a complex with S13 that binds strongly to the 16S ribosomal RNA. In Bacteroides thetaiotaomicron (strain ATCC 29148 / DSM 2079 / JCM 5827 / CCUG 10774 / NCTC 10582 / VPI-5482 / E50), this protein is Small ribosomal subunit protein uS19.